Reading from the N-terminus, the 248-residue chain is 3-deoxy-manno-octulosonate cytidylyltransferase (248 aa).

It belongs to the KdsB family.

Its subcellular location is the cytoplasm. The enzyme catalyses 3-deoxy-alpha-D-manno-oct-2-ulosonate + CTP = CMP-3-deoxy-beta-D-manno-octulosonate + diphosphate. The protein operates within nucleotide-sugar biosynthesis; CMP-3-deoxy-D-manno-octulosonate biosynthesis; CMP-3-deoxy-D-manno-octulosonate from 3-deoxy-D-manno-octulosonate and CTP: step 1/1. Its pathway is bacterial outer membrane biogenesis; lipopolysaccharide biosynthesis. Activates KDO (a required 8-carbon sugar) for incorporation into bacterial lipopolysaccharide in Gram-negative bacteria. The sequence is that of 3-deoxy-manno-octulosonate cytidylyltransferase from Chlorobium chlorochromatii (strain CaD3).